Reading from the N-terminus, the 299-residue chain is Small ribosomal subunit protein uS3 (299 aa).

The region spanning 39–107 is the KH type-2 domain; sequence VREYLKAKLK…PVAVNIEEVR (69 aa). Residues 214-299 form a disordered region; sequence PVIKTDERED…AVAPGDAKGE (86 aa). Residues 217 to 248 show a composition bias toward basic and acidic residues; the sequence is KTDEREDDRRNRRGPRSDRPAGDRRPPSRDGA. Residues 257-282 are compositionally biased toward low complexity; sequence ADAGAAAPTDKPADGAAPAAADGPKA.

It belongs to the universal ribosomal protein uS3 family. Part of the 30S ribosomal subunit. Forms a tight complex with proteins S10 and S14.

Functionally, binds the lower part of the 30S subunit head. Binds mRNA in the 70S ribosome, positioning it for translation. This chain is Small ribosomal subunit protein uS3, found in Methylibium petroleiphilum (strain ATCC BAA-1232 / LMG 22953 / PM1).